We begin with the raw amino-acid sequence, 352 residues long: Probable gamma-glutamyl hydrolase 3 (352 aa).

The signal sequence occupies residues 1 to 19 (MWRFCFFLSLLFFDVSAVK). One can recognise a Gamma-glutamyl hydrolase domain in the interval 49–352 (AADPNLNYKP…SGDDEVYIFT (304 aa)). Cysteine 166 acts as the Nucleophile in catalysis. Histidine 279 is an active-site residue.

It belongs to the peptidase C26 family.

Its subcellular location is the vacuole. The protein resides in the secreted. It is found in the extracellular space. The protein localises to the cell wall. The enzyme catalyses (6S)-5,6,7,8-tetrahydrofolyl-(gamma-L-Glu)(n) + (n-1) H2O = (6S)-5,6,7,8-tetrahydrofolate + (n-1) L-glutamate. Its function is as follows. Cleaves the polyglutamate sidechains of folate polyglutamates in the vacuole. Is important for polyglutamyl tail length determination before vacuolar exit. Plays a role on folate stability and intracellular folate content. This chain is Probable gamma-glutamyl hydrolase 3 (GGH3), found in Arabidopsis thaliana (Mouse-ear cress).